The following is a 508-amino-acid chain: Photosystem II CP47 reaction center protein (508 aa).

The next 6 helical transmembrane spans lie at 21–36 (SVHIMHTALVAGWAGS), 101–115 (IVFSGLCFLAAIWHW), 140–156 (GIHLFLSGVACFGFGAF), 203–218 (IAAGTLGILAGLFHLS), 237–252 (VLSSSIAAVFFAAFVV), and 457–472 (SFALLFFFGHIWHGAR).

It belongs to the PsbB/PsbC family. PsbB subfamily. In terms of assembly, PSII is composed of 1 copy each of membrane proteins PsbA, PsbB, PsbC, PsbD, PsbE, PsbF, PsbH, PsbI, PsbJ, PsbK, PsbL, PsbM, PsbT, PsbX, PsbY, PsbZ, Psb30/Ycf12, at least 3 peripheral proteins of the oxygen-evolving complex and a large number of cofactors. It forms dimeric complexes. It depends on Binds multiple chlorophylls. PSII binds additional chlorophylls, carotenoids and specific lipids. as a cofactor.

The protein resides in the plastid. It is found in the chloroplast thylakoid membrane. Its function is as follows. One of the components of the core complex of photosystem II (PSII). It binds chlorophyll and helps catalyze the primary light-induced photochemical processes of PSII. PSII is a light-driven water:plastoquinone oxidoreductase, using light energy to abstract electrons from H(2)O, generating O(2) and a proton gradient subsequently used for ATP formation. This chain is Photosystem II CP47 reaction center protein, found in Acorus calamus var. americanus (American sweet flag).